The sequence spans 361 residues: Putative F-box protein At3g18340 (361 aa).

The region spanning 1–46 (MASGKLPWELEEEILCRLPPGSLVRLRSVCKHWNDLYNDKWFIKKS) is the F-box domain.

The protein is Putative F-box protein At3g18340 of Arabidopsis thaliana (Mouse-ear cress).